Here is a 210-residue protein sequence, read N- to C-terminus: Translation initiation factor IF-3 (210 aa).

Residues A169–V210 are disordered. Basic and acidic residues predominate over residues P176–E186. Residues K187–V210 are compositionally biased toward low complexity.

Belongs to the IF-3 family. Monomer.

Its subcellular location is the cytoplasm. Its function is as follows. IF-3 binds to the 30S ribosomal subunit and shifts the equilibrium between 70S ribosomes and their 50S and 30S subunits in favor of the free subunits, thus enhancing the availability of 30S subunits on which protein synthesis initiation begins. The polypeptide is Translation initiation factor IF-3 (Deinococcus deserti (strain DSM 17065 / CIP 109153 / LMG 22923 / VCD115)).